The following is a 378-amino-acid chain: UPF0754 membrane protein BT9727_0767 (378 aa).

A run of 2 helical transmembrane segments spans residues Met-1–Thr-21 and Tyr-357–Leu-377.

The protein belongs to the UPF0754 family.

It localises to the cell membrane. This is UPF0754 membrane protein BT9727_0767 from Bacillus thuringiensis subsp. konkukian (strain 97-27).